Here is a 487-residue protein sequence, read N- to C-terminus: F-box/LRR-repeat protein At1g48400 (487 aa).

The region spanning 9–57 (RDSISNLPDEILGKILSLLPTKVAASTSVLSKRWRNLLGLVDNLCFDES) is the F-box domain. LRR repeat units follow at residues 71–97 (SLRFCDFVDKTFALLSNSHIKKFSLSR), 125–153 (HLHATPMSFVAIETKLLTSNTLVKLTLSA), 174–199 (SILGDYTNYIRLIDGCPVLEELYMRD), 225–251 (THNPNEMIWHELIYFEAPSLVYLDYSS), 327–358 (TLHLSPDSLEVFHFCCKSMPVFNNLLNLSIES), and 359–384 (NKDKGWQVMPLLLKSCPNLHTLVIKG).

The polypeptide is F-box/LRR-repeat protein At1g48400 (Arabidopsis thaliana (Mouse-ear cress)).